The sequence spans 237 residues: Orotidine 5'-phosphate decarboxylase (237 aa).

Substrate is bound by residues Asp10, Lys33, 60-69, Thr124, Arg186, Gln195, Gly215, and Arg216; that span reads DLKLHDIPNT. Lys62 functions as the Proton donor in the catalytic mechanism.

It belongs to the OMP decarboxylase family. Type 1 subfamily. In terms of assembly, homodimer.

The enzyme catalyses orotidine 5'-phosphate + H(+) = UMP + CO2. It functions in the pathway pyrimidine metabolism; UMP biosynthesis via de novo pathway; UMP from orotate: step 2/2. Functionally, catalyzes the decarboxylation of orotidine 5'-monophosphate (OMP) to uridine 5'-monophosphate (UMP). The polypeptide is Orotidine 5'-phosphate decarboxylase (Lactiplantibacillus plantarum (strain ATCC BAA-793 / NCIMB 8826 / WCFS1) (Lactobacillus plantarum)).